The primary structure comprises 200 residues: Molybdopterin synthase catalytic subunit (200 aa).

Residues lysine 16 to glutamate 30 show a composition bias toward polar residues. The tract at residues lysine 16–threonine 43 is disordered. The residue at position 20 (serine 20) is a Phosphoserine. Substrate-binding positions include histidine 154–arginine 155, lysine 170, and lysine 177–glutamate 179.

Belongs to the MoaE family. MOCS2B subfamily. Heterotetramer; composed of 2 small (MOCS2A) and 2 large (MOCS2B) subunits.

It localises to the cytoplasm. The protein localises to the cytosol. The enzyme catalyses 2 [molybdopterin-synthase sulfur-carrier protein]-C-terminal-Gly-aminoethanethioate + cyclic pyranopterin phosphate + H2O = molybdopterin + 2 [molybdopterin-synthase sulfur-carrier protein]-C-terminal Gly-Gly + 2 H(+). Its pathway is cofactor biosynthesis; molybdopterin biosynthesis. In terms of biological role, catalytic subunit of the molybdopterin synthase complex, a complex that catalyzes the conversion of precursor Z into molybdopterin. Acts by mediating the incorporation of 2 sulfur atoms from thiocarboxylated MOCS2A into precursor Z to generate a dithiolene group. This is Molybdopterin synthase catalytic subunit from Rattus norvegicus (Rat).